We begin with the raw amino-acid sequence, 188 residues long: MGISRDSRHKRRLTGGRYPVHKKKRKYELGRPSSNTKLGSKLVRKVRCRGGNLKFRALRLDSGNFSWGSQNVTRKTRVMDVVYNASSNELVRTKTLVKNAIVTVDPTPFKLWFKTHYGLELGKSSEDPQASEKVAALVPRTLLDQFSSGRLLACISSRPGQCGRCDGYVLEGEELNFYRRRMDKKKRV.

Positions 1–34 are disordered; it reads MGISRDSRHKRRLTGGRYPVHKKKRKYELGRPSS. Positions 7 to 26 are enriched in basic residues; that stretch reads SRHKRRLTGGRYPVHKKKRK.

The protein belongs to the eukaryotic ribosomal protein eS8 family.

The chain is Small ribosomal subunit protein eS8 (RPS8) from Theileria parva (East coast fever infection agent).